A 223-amino-acid polypeptide reads, in one-letter code: Kynurenine formamidase (223 aa).

Phenylalanine 34 contributes to the substrate binding site. Zn(2+) contacts are provided by histidine 64, histidine 68, and aspartate 70. Histidine 74 (proton donor/acceptor) is an active-site residue. Zn(2+)-binding residues include histidine 174 and glutamate 186.

The protein belongs to the Cyclase 1 superfamily. KynB family. In terms of assembly, homodimer. Requires Zn(2+) as cofactor.

The catalysed reaction is N-formyl-L-kynurenine + H2O = L-kynurenine + formate + H(+). Its pathway is amino-acid degradation; L-tryptophan degradation via kynurenine pathway; L-kynurenine from L-tryptophan: step 2/2. Catalyzes the hydrolysis of N-formyl-L-kynurenine to L-kynurenine, the second step in the kynurenine pathway of tryptophan degradation. This Polaromonas naphthalenivorans (strain CJ2) protein is Kynurenine formamidase.